The chain runs to 414 residues: Probable cytochrome P450 127A1 (414 aa).

Position 364 (Cys-364) interacts with heme.

Belongs to the cytochrome P450 family. Heme serves as cofactor.

Functionally, cytochromes P450 are a group of heme-thiolate monooxygenases. They oxidize a variety of structurally unrelated compounds, including steroids, fatty acids, and xenobiotics. The chain is Probable cytochrome P450 127A1 (cyp127A1) from Sinorhizobium fredii (strain NBRC 101917 / NGR234).